Here is a 201-residue protein sequence, read N- to C-terminus: Ras-related protein Rab-1B (201 aa).

Methionine 1 carries the N-acetylmethionine modification. The GTP site is built by serine 17, glycine 18, valine 19, glycine 20, lysine 21, serine 22, cysteine 23, tyrosine 33, threonine 34, glutamate 35, serine 36, serine 39, and threonine 40. Serine 22 serves as a coordination point for Mg(2+). The Switch 1 signature appears at 30–45 (DDTYTESYISTIGVDF). Threonine 40 and aspartate 63 together coordinate Mg(2+). The tract at residues 64-83 (TAGQERFRTITSSYYRGAHG) is switch 2 region; required for interaction with REP1/CHM. Residues 65 to 80 (AGQERFRTITSSYYRG) carry the Switch 2 motif. GTP-binding residues include glycine 66, asparagine 121, lysine 122, aspartate 124, serine 151, alanine 152, and lysine 153. The interval 174–201 (GPGAASGGERPNLKIDSTPVKPAGGGCC) is disordered. S-geranylgeranyl cysteine attachment occurs at residues cysteine 200 and cysteine 201. Cysteine 201 carries the cysteine methyl ester modification.

The protein belongs to the small GTPase superfamily. Rab family. As to quaternary structure, interacts with MICAL1 and MICAL2. Interacts (in GTP-bound form) with MICALCL, MICAL1 and MILCAL3. Interacts with GDI1; the interaction requires the GDP-bound state. Interacts with CHM/REP1; the interaction requires the GDP-bound form and is necessary for prenylation by GGTase II. Interacts with RabGAP TBC1D20. Interacts (in GDP-bound form) with lipid phosphatase MTMR6 (via GRAM domain); the interaction regulates MTMR6 recruitment to the endoplasmic reticulum-Golgi intermediate compartment. Interacts (in GDP-bound form) with lipid phosphatase MTMR7. Requires Mg(2+) as cofactor. Prenylated; by GGTase II, only after interaction of the substrate with Rab escort protein 1 (REP1).

Its subcellular location is the cytoplasm. It is found in the membrane. It localises to the preautophagosomal structure membrane. The protein resides in the perinuclear region. The catalysed reaction is GTP + H2O = GDP + phosphate + H(+). Its activity is regulated as follows. Regulated by guanine nucleotide exchange factors (GEFs) which promote the exchange of bound GDP for free GTP. Regulated by GTPase activating proteins (GAPs) including TBC1D20 which increases the GTP hydrolysis activity. Inhibited by GDP dissociation inhibitors (GDIs). Functionally, the small GTPases Rab are key regulators of intracellular membrane trafficking, from the formation of transport vesicles to their fusion with membranes. Rabs cycle between an inactive GDP-bound form and an active GTP-bound form that is able to recruit to membranes different set of downstream effectors directly responsible for vesicle formation, movement, tethering and fusion. Plays a role in the initial events of the autophagic vacuole development which take place at specialized regions of the endoplasmic reticulum. Regulates vesicular transport between the endoplasmic reticulum and successive Golgi compartments. Required to modulate the compacted morphology of the Golgi. Promotes the recruitment of lipid phosphatase MTMR6 to the endoplasmic reticulum-Golgi intermediate compartment. This is Ras-related protein Rab-1B (RAB1B) from Macaca fascicularis (Crab-eating macaque).